We begin with the raw amino-acid sequence, 478 residues long: Phenylalanine--tRNA ligase alpha subunit (478 aa).

L-phenylalanine-binding positions include T318, 357 to 359 (QLE), and Y397. Residue E399 participates in Mg(2+) binding. An L-phenylalanine-binding site is contributed by F422.

The protein belongs to the class-II aminoacyl-tRNA synthetase family. Phe-tRNA synthetase alpha subunit type 2 subfamily. As to quaternary structure, tetramer of two alpha and two beta subunits. Mg(2+) is required as a cofactor.

The protein localises to the cytoplasm. The enzyme catalyses tRNA(Phe) + L-phenylalanine + ATP = L-phenylalanyl-tRNA(Phe) + AMP + diphosphate + H(+). The protein is Phenylalanine--tRNA ligase alpha subunit of Methanospirillum hungatei JF-1 (strain ATCC 27890 / DSM 864 / NBRC 100397 / JF-1).